The sequence spans 98 residues: Large ribosomal subunit protein uL23 (98 aa).

Belongs to the universal ribosomal protein uL23 family. As to quaternary structure, part of the 50S ribosomal subunit. Contacts protein L29, and trigger factor when it is bound to the ribosome.

Its function is as follows. One of the early assembly proteins it binds 23S rRNA. One of the proteins that surrounds the polypeptide exit tunnel on the outside of the ribosome. Forms the main docking site for trigger factor binding to the ribosome. The polypeptide is Large ribosomal subunit protein uL23 (Thioalkalivibrio sulfidiphilus (strain HL-EbGR7)).